A 366-amino-acid polypeptide reads, in one-letter code: uncharacterized protein (366 aa).

Residue Glu139 is the Proton donor of the active site. Glu249 serves as the catalytic Nucleophile.

It belongs to the glycosyl hydrolase 53 family.

This is an uncharacterized protein from Niallia circulans (Bacillus circulans).